We begin with the raw amino-acid sequence, 232 residues long: Large ribosomal subunit protein uL1 (232 aa).

This sequence belongs to the universal ribosomal protein uL1 family. As to quaternary structure, part of the 50S ribosomal subunit.

Its function is as follows. Binds directly to 23S rRNA. The L1 stalk is quite mobile in the ribosome, and is involved in E site tRNA release. In terms of biological role, protein L1 is also a translational repressor protein, it controls the translation of the L11 operon by binding to its mRNA. The polypeptide is Large ribosomal subunit protein uL1 (Amoebophilus asiaticus (strain 5a2)).